We begin with the raw amino-acid sequence, 350 residues long: Methionine import ATP-binding protein MetN (350 aa).

An ABC transporter domain is found at 9–245 (LKDVDVEFHG…PQQQLTKDFI (237 aa)). Residue 43–50 (GYSGAGKS) coordinates ATP.

The protein belongs to the ABC transporter superfamily. Methionine importer (TC 3.A.1.24) family. As to quaternary structure, the complex is composed of two ATP-binding proteins (MetN), two transmembrane proteins (MetI) and a solute-binding protein (MetQ).

Its subcellular location is the cell membrane. The enzyme catalyses L-methionine(out) + ATP + H2O = L-methionine(in) + ADP + phosphate + H(+). The catalysed reaction is D-methionine(out) + ATP + H2O = D-methionine(in) + ADP + phosphate + H(+). Functionally, part of the ABC transporter complex MetNIQ involved in methionine import. Responsible for energy coupling to the transport system. The polypeptide is Methionine import ATP-binding protein MetN (Lacticaseibacillus paracasei (strain ATCC 334 / BCRC 17002 / CCUG 31169 / CIP 107868 / KCTC 3260 / NRRL B-441) (Lactobacillus paracasei)).